We begin with the raw amino-acid sequence, 324 residues long: Transcription factor MYB74 (324 aa).

HTH myb-type domains are found at residues 10-62 and 63-117; these read KNGL…TNYL and RPDI…RKRL. DNA-binding regions (H-T-H motif) lie at residues 38-62 and 90-113; these read WRTL…TNYL and WSAI…NTHI.

Highly expressed in flowers and at lower levels in rosette leaves and cauline leaves. Expressed at low levels in roots, stems and siliques.

It is found in the nucleus. In terms of biological role, probable transcription factor that may function in salt stress response. This chain is Transcription factor MYB74, found in Arabidopsis thaliana (Mouse-ear cress).